Reading from the N-terminus, the 218-residue chain is Small ribosomal subunit protein uS3 (218 aa).

The KH type-2 domain maps to 39-107; that stretch reads IRDYIKSKLL…QISINIVEIK (69 aa).

It belongs to the universal ribosomal protein uS3 family. As to quaternary structure, part of the 30S ribosomal subunit. Forms a tight complex with proteins S10 and S14.

In terms of biological role, binds the lower part of the 30S subunit head. Binds mRNA in the 70S ribosome, positioning it for translation. This is Small ribosomal subunit protein uS3 from Desulforudis audaxviator (strain MP104C).